Here is a 1242-residue protein sequence, read N- to C-terminus: DNA excision repair protein ERCC-6-like (1242 aa).

Ser14 carries the post-translational modification Phosphoserine. A TPR 1 repeat occupies 21–54 (YLRYVKEAKEATKNGDLEQALKLFNLAKDIFPNE). Positions 109 to 277 (SLYRDGRRGG…WSLFDFACQG (169 aa)) constitute a Helicase ATP-binding domain. Residue 122–129 (DDMGLGKT) participates in ATP binding. Positions 228–231 (DEAH) match the DEAH box motif. Residues 466–626 (FLMDLLKKLR…PFRYFSKQEL (161 aa)) form the Helicase C-terminal domain. Phosphoserine is present on residues Ser755 and Ser773. A Phosphothreonine modification is found at Thr815. Ser963, Ser989, Ser998, and Ser1021 each carry phosphoserine. Thr1055 carries the phosphothreonine modification. Residues Ser1061, Ser1090, and Ser1110 each carry the phosphoserine modification. The disordered stretch occupies residues 1103–1181 (EERLDNSSEA…LSDGQLVDSP (79 aa)). Composition is skewed to basic and acidic residues over residues 1105–1121 (RLDN…HLEE) and 1130–1140 (APEHTKEDPSR). Residues 1141-1156 (ETLSSENKSSQLSTSK) are compositionally biased toward polar residues. Phosphoserine is present on residues Ser1173 and Ser1180. A TPR 2 repeat occupies 1192–1225 (YDTLVLHGKELKECGKIQEALDCLVKALDIKSSD).

The protein belongs to the SNF2/RAD54 helicase family. In terms of assembly, interacts with PLK1, which phosphorylates it. Both proteins are mutually dependent on each other for correct subcellular localization. Interacts (via N-terminal TPR repeat) with BEND3 (via BEN domains 1 and 3); the interaction is direct. Post-translationally, phosphorylation by PLK1 prevents the association with chromosome arms and restricts its localization to the kinetochore-centromere region.

It is found in the chromosome. The protein resides in the centromere. Its subcellular location is the kinetochore. The catalysed reaction is ATP + H2O = ADP + phosphate + H(+). Functionally, DNA helicase that acts as a tension sensor that associates with catenated DNA which is stretched under tension until it is resolved during anaphase. Functions as ATP-dependent DNA translocase. Can promote Holliday junction branch migration (in vitro). The polypeptide is DNA excision repair protein ERCC-6-like (ERCC6L) (Bos taurus (Bovine)).